Here is a 142-residue protein sequence, read N- to C-terminus: MSSLDEVAESRKQRLAELRKIKQLENKTRDSQEVQKNVIEHRNYDPEVQAPKMGFVEPPNMIESVEALSKEIEEKTKRKIEEQSSVPVEELDLVTLRPKKPTWDLERDLKERMRSLETQNQNAIAFYIQQLISERAHSTEKA.

Basic and acidic residues predominate over residues 24 to 45 (LENKTRDSQEVQKNVIEHRNYD). Residues 24–54 (LENKTRDSQEVQKNVIEHRNYDPEVQAPKMG) form a disordered region.

In terms of assembly, belongs to the 40S cdc5-associated complex (or cwf complex), a spliceosome sub-complex reminiscent of a late-stage spliceosome composed of the U2, U5 and U6 snRNAs and at least brr2, cdc5, cwf2/prp3, cwf3/syf1, cwf4/syf3, cwf5/ecm2, spp42/cwf6, cwf7/spf27, cwf8, cwf9, cwf10, cwf11, cwf12, prp45/cwf13, cwf14, cwf15, cwf16, cwf17, cwf18, cwf19, cwf20, cwf21, cwf22, cwf23, cwf24, cwf25, cwf26, cyp7/cwf27, cwf28, cwf29/ist3, lea1, msl1, prp5/cwf1, prp10, prp12/sap130, prp17, prp22, sap61, sap62, sap114, sap145, slu7, smb1, smd1, smd3, smf1, smg1 and syf2.

The protein localises to the nucleus. In terms of biological role, involved in mRNA splicing where it associates with cdc5 and the other cwf proteins as part of the spliceosome. In Schizosaccharomyces pombe (strain 972 / ATCC 24843) (Fission yeast), this protein is Pre-mRNA-splicing factor cwf18 (cwf18).